The primary structure comprises 163 residues: Urease accessory protein UreE (163 aa).

A disordered region spans residues 144–163 (QPEPGAYGGSSAGSHDGHHH).

It belongs to the UreE family.

The protein localises to the cytoplasm. Involved in urease metallocenter assembly. Binds nickel. Probably functions as a nickel donor during metallocenter assembly. This is Urease accessory protein UreE from Aliivibrio fischeri (strain ATCC 700601 / ES114) (Vibrio fischeri).